A 394-amino-acid chain; its full sequence is NAD(P)H-quinone oxidoreductase subunit H (394 aa).

The protein belongs to the complex I 49 kDa subunit family. In terms of assembly, NDH-1 can be composed of about 15 different subunits; different subcomplexes with different compositions have been identified which probably have different functions. In terms of processing, the initiator methionine has been seen to be kept and removed.

The protein localises to the cellular thylakoid membrane. The enzyme catalyses a plastoquinone + NADH + (n+1) H(+)(in) = a plastoquinol + NAD(+) + n H(+)(out). It catalyses the reaction a plastoquinone + NADPH + (n+1) H(+)(in) = a plastoquinol + NADP(+) + n H(+)(out). In terms of biological role, NDH-1 shuttles electrons from an unknown electron donor, via FMN and iron-sulfur (Fe-S) centers, to quinones in the respiratory and/or the photosynthetic chain. The immediate electron acceptor for the enzyme in this species is believed to be plastoquinone. Couples the redox reaction to proton translocation, and thus conserves the redox energy in a proton gradient. Cyanobacterial NDH-1 also plays a role in inorganic carbon-concentration. The chain is NAD(P)H-quinone oxidoreductase subunit H (ndhH) from Synechocystis sp. (strain ATCC 27184 / PCC 6803 / Kazusa).